We begin with the raw amino-acid sequence, 400 residues long: Homoserine O-acetyltransferase (400 aa).

Polar residues predominate over residues 1-11; the sequence is MVKVQSIQSQA. The interval 1–24 is disordered; sequence MVKVQSIQSQAVHAEERAHEADHP. Over residues 13–23 the composition is skewed to basic and acidic residues; that stretch reads HAEERAHEADH. Positions 64–373 constitute an AB hydrolase-1 domain; sequence NAILVCHALT…TDRGHDAFLL (310 aa). Ser169 functions as the Nucleophile in the catalytic mechanism. Arg239 lines the substrate pocket. Residues Asp335 and His368 contribute to the active site. A substrate-binding site is contributed by Asp369.

It belongs to the AB hydrolase superfamily. MetX family. Homodimer.

The protein localises to the cytoplasm. The enzyme catalyses L-homoserine + acetyl-CoA = O-acetyl-L-homoserine + CoA. Its pathway is amino-acid biosynthesis; L-methionine biosynthesis via de novo pathway; O-acetyl-L-homoserine from L-homoserine: step 1/1. Its function is as follows. Transfers an acetyl group from acetyl-CoA to L-homoserine, forming acetyl-L-homoserine. This Rhodopseudomonas palustris (strain BisB18) protein is Homoserine O-acetyltransferase.